The following is a 307-amino-acid chain: MNTPWTHTTVLLNEAVEALLSGSTAATGTYVDATFGRGGHARAILARLAPEGRLIAFDKDAEAVAEAARISDARFSIRHQGFRSLGELPDASVAGVLMDLGVSSPQIDNPVRGFSFRFDGPLDMRMDTTRGESVADWLATAELQQIAEVIRDYGEERFAVQIAKAIVARRQERGAISTTSELAELVAGTVKTREPGQNPATRTFQAFRIFINAELEELQQALEASLSVLQPGGRLAVISFHSLEDRIVKQFIARHSKEVYDRRAPFAAPKAMKLRALERIKPSDAEVHGNPRSRSAILRVAERTQEV.

Residues 38–40, Asp-58, Phe-82, Asp-99, and Gln-106 contribute to the S-adenosyl-L-methionine site; that span reads GGH.

It belongs to the methyltransferase superfamily. RsmH family.

The protein localises to the cytoplasm. The enzyme catalyses cytidine(1402) in 16S rRNA + S-adenosyl-L-methionine = N(4)-methylcytidine(1402) in 16S rRNA + S-adenosyl-L-homocysteine + H(+). Its function is as follows. Specifically methylates the N4 position of cytidine in position 1402 (C1402) of 16S rRNA. The protein is Ribosomal RNA small subunit methyltransferase H of Variovorax paradoxus (strain S110).